A 226-amino-acid polypeptide reads, in one-letter code: Ribonuclease 3 (226 aa).

One can recognise an RNase III domain in the interval 7-129 (LPRLCRTLGY…IIGAVYLDAD (123 aa)). Glu-42 is a binding site for Mg(2+). Asp-46 is an active-site residue. Residues Asp-115 and Glu-118 each contribute to the Mg(2+) site. Residue Glu-118 is part of the active site. Positions 156 to 226 (DPKTILQEYL…AAQVLELLNK (71 aa)) constitute a DRBM domain.

This sequence belongs to the ribonuclease III family. Homodimer. Requires Mg(2+) as cofactor.

Its subcellular location is the cytoplasm. It carries out the reaction Endonucleolytic cleavage to 5'-phosphomonoester.. Functionally, digests double-stranded RNA. Involved in the processing of primary rRNA transcript to yield the immediate precursors to the large and small rRNAs (23S and 16S). Processes some mRNAs, and tRNAs when they are encoded in the rRNA operon. Processes pre-crRNA and tracrRNA of type II CRISPR loci if present in the organism. In Shewanella frigidimarina (strain NCIMB 400), this protein is Ribonuclease 3.